The primary structure comprises 332 residues: Putative pumilio homolog 17 (332 aa).

The 302-residue stretch at 1-302 folds into the PUM-HD domain; it reads MTNINRLSMS…ILTADLFYSL (302 aa). The Pumilio 1 repeat unit spans residues 82 to 117; that stretch reads SDSDYFMVITRNKNGSKSLQKLMRMSDDMDVFFFVA. Residues 118–152 form a Pumilio 2; degenerate repeat; sequence IMRLFIHVMIDKYASYVAIQGMRIFKQDKRELMYD. 4 Pumilio repeats span residues 153–188, 189–225, 226–264, and 265–300; these read HILR…DELM, DIVS…NIAD, KLCG…DLLA, and CKTE…DLFY.

The protein localises to the cytoplasm. Functionally, sequence-specific RNA-binding protein that regulates translation and mRNA stability by binding the 3'-UTR of target mRNAs. The polypeptide is Putative pumilio homolog 17 (APUM17) (Arabidopsis thaliana (Mouse-ear cress)).